Here is a 206-residue protein sequence, read N- to C-terminus: Protein phosphatase inhibitor 2 (206 aa).

The interval 1–36 (MAASTASHRPIKGILKNKTSAASPPVVPSAEQPRPI) is disordered. Position 2 is an N-acetylalanine (alanine 2). The segment at 12-17 (KGILKN) is required for binding PPP1CC. A required for binding the 'RVXF' binding groove of PPP1CC region spans residues 44–56 (KSQKWDEMNILAT). Phosphoserine; by ATM is present on serine 45. Threonine 74 bears the Phosphothreonine mark. The segment at 75–143 (PYHNMIGDDE…EREKKRQFEM (69 aa)) is disordered. Residues 81–92 (GDDEDAYSDSEG) are compositionally biased toward acidic residues. A phosphoserine mark is found at serine 88 and serine 90. Residues threonine 97 and threonine 117 each carry the phosphothreonine modification. The span at 111–121 (SEPKYRTREQE) shows a compositional bias: basic and acidic residues. 3 positions are modified to phosphoserine: serine 122, serine 123, and serine 131. Residues 122 to 131 (SSGEEDNDLS) are compositionally biased toward acidic residues. The span at 132–143 (PEEREKKRQFEM) shows a compositional bias: basic and acidic residues. The tract at residues 148–151 (HYNE) is required for binding PPP1CC catalytic center, displacing metal ions and inhibition of PPP1CC catalytic activity. Residues 164–206 (KDLHDDDEDEEMAETADGDSMNVEESSQGSTTSDHLQHKSQSS) are disordered. Over residues 168 to 180 (DDDEDEEMAETAD) the composition is skewed to acidic residues. The segment covering 186–206 (VEESSQGSTTSDHLQHKSQSS) has biased composition (polar residues).

The protein belongs to the protein phosphatase inhibitor 2 family. As to quaternary structure, heterodimer with PP1. Post-translationally, phosphorylation on Ser-45 by ATM activates PP1 by dissociating the PP1-PPP1R2 complex. Phosphorylation on Thr-74 by GSK3 activates PP1 by dissociating the PP1-PPP1R2 complex.

Functionally, inhibitor of protein-phosphatase 1. The sequence is that of Protein phosphatase inhibitor 2 (Ppp1r2) from Mus musculus (Mouse).